Here is a 359-residue protein sequence, read N- to C-terminus: Mitochondrial glutathione transporter SLC25A39 (359 aa).

Residues 1 to 14 (MADQDPAGISPLQQ) are Mitochondrial intermembrane-facing. Solcar repeat units lie at residues 9 to 151 (ISPL…LKAF), 159 to 243 (SDLY…VKSW), and 253 to 347 (TSVG…GKSF). A helical membrane pass occupies residues 15-35 (MVASGTGAVVTSLFMTPLDVV). The Mitochondrial matrix portion of the chain corresponds to 36–121 (KVRLQSQRPS…VKIVRHEGTR (86 aa)). [2Fe-2S] cluster-binding residues include Cys-74, Cys-78, Cys-88, and Cys-94. A helical transmembrane segment spans residues 122–142 (TLWSGLPATLVMTVPATAIYF). Over 143–160 (TAYDQLKAFLCGRALTSD) the chain is Mitochondrial intermembrane. Residues 161-181 (LYAPMVAGALARLGTVTVISP) form a helical membrane-spanning segment. Over 182-214 (LELMRTKLQAQHVSYRELGACVRTAVAQGGWRS) the chain is Mitochondrial matrix. The helical transmembrane segment at 215 to 235 (LWLGWGPTALRDVPFSALYWF) threads the bilayer. The Mitochondrial intermembrane segment spans residues 236 to 258 (NYELVKSWLNGFRPKDQTSVGMS). Residues 259–279 (FVAGGISGTVAAVLTLPFDVV) traverse the membrane as a helical segment. The Mitochondrial matrix portion of the chain corresponds to 280–317 (KTQRQVALGAMEAVRVNPLHVDSTWLLLRRIRAESGTK). Residues 318–338 (GLFAGFLPRIIKAAPSCAIMI) form a helical membrane-spanning segment. Residues 339–359 (STYEFGKSFFQRLNQDRLLGG) lie on the Mitochondrial intermembrane side of the membrane.

It belongs to the mitochondrial carrier (TC 2.A.29) family. Cleaved and degraded by AFG3L2; degradation by AFG3L2 is regulated by the ability of SLC25A39 to bind iron-sulfur. In absence of mitochondrial glutathione, SLC25A39 binds iron-sulfur, preventing cleavage and degradation by AFG3L2. The presence of mitochondrial glutathione prevents iron-sulfur-binding to SLC25A39, promoting cleavage and degradation by AFG3L2. In terms of tissue distribution, expressed in many tissues. Abundant in testis and kidney.

Its subcellular location is the mitochondrion inner membrane. The enzyme catalyses glutathione(in) = glutathione(out). With respect to regulation, the activity of SLC25A39 is regulated by levels of mitochondrial glutathione via its ability to bind [2Fe-2S] iron-sulfur cluster. Upon physiological levels of mitochondrial glutathione, glutathione prevents iron-sulfur-binding to SLC25A39 promoting cleavage and degradation by AFG3L2. Upon depletion of mitochondrial glutathione, SLC25A39 binds iron-sulfur, preventing cleavage and degradation by AFG3L2. Its function is as follows. Mitochondrial transporter required for glutathione import into mitochondria. Glutathione, which plays key roles in oxidative metabolism, is produced exclusively in the cytosol and is imported in many organelles. Mitochondrial glutathione is required for the activity and stability of proteins containing iron-sulfur clusters, as well as erythropoiesis. The polypeptide is Mitochondrial glutathione transporter SLC25A39 (Homo sapiens (Human)).